The chain runs to 870 residues: Elastin (870 aa).

The N-terminal stretch at 1–27 (MAGLTAAVPQPGVLLILLLNLLHPAQP) is a signal peptide. P39 and P75 each carry 4-hydroxyproline. Position 87 is a hydroxyproline (P87). P105 is modified (4-hydroxyproline). Allysine occurs at positions 122 and 126. A 4-hydroxyproline mark is found at P207, P220, P223, and P244. K290 and K309 each carry allysine. P338 carries the post-translational modification 4-hydroxyproline. Allysine occurs at positions 360 and 363. P375 carries the post-translational modification Hydroxyproline. P402 and P408 each carry 4-hydroxyproline. 2 positions are modified to hydroxyproline: P413 and P418. Allysine is present on residues K434, K438, K441, K485, and K488. P518 and P539 each carry 4-hydroxyproline. An allysine mark is found at K554, K558, K615, K619, and K623. Residues P637, P646, P662, and P670 each carry the 4-hydroxyproline modification. K677 and K680 each carry allysine. P715 is modified (4-hydroxyproline). Allysine is present on residues K730, K734, K793, and K796. P842 bears the 4-hydroxyproline mark. C860 and C865 are joined by a disulfide.

Belongs to the elastin family. In terms of assembly, the polymeric elastin chains are cross-linked together into an extensible 3D network. Forms a ternary complex with BGN and MFAP2. Interacts with MFAP2 via divalent cations (calcium &gt; magnesium &gt; manganese) in a dose-dependent and saturating manner. Interacts with FBLN5 and FBN1. Forms a ternary complex with FBN1 and FBLN2 or FBLN5. Interacts with MFAP4 in a Ca (2+)-dependent manner; this interaction promotes ELN self-assembly. Interacts with EFEMP2 with moderate affinity. Elastin is formed through the cross-linking of its soluble precursor tropoelastin. Cross-linking is initiated through the action of lysyl oxidase on exposed lysines to form allysine. Subsequent spontaneous condensation reactions with other allysine or unmodified lysine residues result in various bi-, tri-, and tetrafunctional cross-links. The most abundant cross-links in mature elastin fibers are lysinonorleucine, allysine aldol, desmosine, and isodesmosine. In terms of processing, hydroxylation on proline residues within the sequence motif, GXPG, is most likely to be 4-hydroxy as this fits the requirement for 4-hydroxylation in vertebrates.

Its subcellular location is the secreted. It is found in the extracellular space. It localises to the extracellular matrix. Its function is as follows. Major structural protein of tissues such as aorta and nuchal ligament, which must expand rapidly and recover completely. Molecular determinant of the late arterial morphogenesis, stabilizing arterial structure by regulating proliferation and organization of vascular smooth muscle. This chain is Elastin (Eln), found in Rattus norvegicus (Rat).